Here is a 124-residue protein sequence, read N- to C-terminus: Small ribosomal subunit protein uS12 (124 aa).

The segment at 1–42 (MPTTQQLIRKGRKTEEETSDAPALEGSPQRRGVCTRVYTTTP) is disordered. Asp89 bears the 3-methylthioaspartic acid mark. The segment at 105-124 (AGVEERRQGRSKYGTKKPRE) is disordered. Residues 113-124 (GRSKYGTKKPRE) show a composition bias toward basic residues.

It belongs to the universal ribosomal protein uS12 family. Part of the 30S ribosomal subunit. Contacts proteins S8 and S17. May interact with IF1 in the 30S initiation complex.

With S4 and S5 plays an important role in translational accuracy. Functionally, interacts with and stabilizes bases of the 16S rRNA that are involved in tRNA selection in the A site and with the mRNA backbone. Located at the interface of the 30S and 50S subunits, it traverses the body of the 30S subunit contacting proteins on the other side and probably holding the rRNA structure together. The combined cluster of proteins S8, S12 and S17 appears to hold together the shoulder and platform of the 30S subunit. The chain is Small ribosomal subunit protein uS12 from Salinibacter ruber (strain DSM 13855 / M31).